The sequence spans 170 residues: Bifunctional protein PyrR (170 aa).

A PRPP-binding motif is present at residues 90–102 (LVLIDDVLMSGRT).

It belongs to the purine/pyrimidine phosphoribosyltransferase family. PyrR subfamily.

The enzyme catalyses UMP + diphosphate = 5-phospho-alpha-D-ribose 1-diphosphate + uracil. Regulates the transcription of the pyrimidine nucleotide (pyr) operon in response to exogenous pyrimidines. Functionally, also displays a weak uracil phosphoribosyltransferase activity which is not physiologically significant. In Pseudomonas syringae pv. tomato (strain ATCC BAA-871 / DC3000), this protein is Bifunctional protein PyrR.